The chain runs to 510 residues: 2,3-bisphosphoglycerate-independent phosphoglycerate mutase (510 aa).

Residues aspartate 12 and serine 62 each coordinate Mn(2+). Serine 62 functions as the Phosphoserine intermediate in the catalytic mechanism. Residues histidine 123, 153 to 154 (RD), arginine 185, arginine 191, 260 to 263 (RPDR), and lysine 335 contribute to the substrate site. Residues aspartate 402, histidine 406, aspartate 443, histidine 444, and histidine 461 each coordinate Mn(2+).

The protein belongs to the BPG-independent phosphoglycerate mutase family. As to quaternary structure, monomer. Requires Mn(2+) as cofactor.

It carries out the reaction (2R)-2-phosphoglycerate = (2R)-3-phosphoglycerate. It functions in the pathway carbohydrate degradation; glycolysis; pyruvate from D-glyceraldehyde 3-phosphate: step 3/5. In terms of biological role, catalyzes the interconversion of 2-phosphoglycerate and 3-phosphoglycerate. The protein is 2,3-bisphosphoglycerate-independent phosphoglycerate mutase of Listeria monocytogenes serovar 1/2a (strain ATCC BAA-679 / EGD-e).